The primary structure comprises 105 residues: Thioredoxin (105 aa).

One can recognise a Thioredoxin domain in the interval Ala1 to Gln105. A disulfide bridge links Cys29 with Cys32.

In terms of biological role, participates in various redox reactions through the reversible oxidation of its active center dithiol to a disulfide and catalyzes dithiol-disulfide exchange reactions. The protein is Thioredoxin (trxA) of Alicyclobacillus acidocaldarius subsp. acidocaldarius (Bacillus acidocaldarius).